The primary structure comprises 748 residues: Bifunctional lysine-specific demethylase and histidyl-hydroxylase NO66 (748 aa).

Disordered stretches follow at residues 65-135 and 160-264; these read NIDR…RSTY and TEVV…DDEG. Over residues 94-110 the composition is skewed to basic and acidic residues; the sequence is LENKKPKVEVKKEDEKS. Positions 124–134 are enriched in polar residues; sequence LVQNETSTRST. Acidic residues predominate over residues 163 to 193; the sequence is VESDDEQMIGLDSDEELEDEDETDIDEDEMM. The segment covering 194-203 has biased composition (basic and acidic residues); it reads IDPKDIERYI. The segment covering 207–264 has biased composition (acidic residues); it reads SVEDEEDMEDEEIEDEEFEDEEFEDEEEEADEQEEEEEDVSDEESVVSEMDADSDDEG. One can recognise a JmjC domain in the interval 399 to 543; it reads QLVNPQTYDD…NLMEKVVPEA (145 aa). Fe cation is bound by residues histidine 442, aspartate 444, and histidine 509.

Belongs to the ROX family. NO66 subfamily. Fe(2+) is required as a cofactor.

The protein resides in the nucleus. It catalyses the reaction N(6),N(6)-dimethyl-L-lysyl(36)-[histone H3] + 2 2-oxoglutarate + 2 O2 = L-lysyl(36)-[histone H3] + 2 formaldehyde + 2 succinate + 2 CO2. In terms of biological role, oxygenase that can act as both a histone lysine demethylase and a ribosomal histidine hydroxylase. Specifically demethylates 'Lys-4' (H3K4me) and 'Lys-36' (H3K36me) of histone H3, thereby playing a central role in histone code. Mediates response to multiple stress stimuli, including heat shock and osmotic, oxidative, and ethanol stress. The polypeptide is Bifunctional lysine-specific demethylase and histidyl-hydroxylase NO66 (jmjc-1) (Caenorhabditis elegans).